Here is a 1070-residue protein sequence, read N- to C-terminus: Probable arabinosyltransferase C (1070 aa).

Transmembrane regions (helical) follow at residues 10–32 (IARLLAVIAGLLGALLAMATPFL), 210–232 (LLKTIAMILGVVLTIVALVALHL), 247–269 (SRWWSIGCLDGLVITILAWWHFV), 399–421 (VATSRLLPVAVACIVGALTLFSG), 425–442 (IASIGALLVAVGPLLTIL), 449–471 (FGAVPLVAPILAASTVTAILIFR), 512–534 (SVARRFAVLALLVALSVAVAMSL), 547–564 (SRRIIGITVTSFLAMMFT), 574–596 (VFAGLAGSLGALAAVAVASAALR), 603–625 (VFAAVVLFVVALSFASVNGWWYV), 645–664 (TALLELTVIVLLLAAWFHFV), and 685–707 (SPIAIATWSLVIFEVASLTMAMI).

It belongs to the emb family.

The protein localises to the cell membrane. In terms of biological role, arabinosyl transferase responsible for the polymerization of arabinose into the arabinan of arabinogalactan. The polypeptide is Probable arabinosyltransferase C (embC) (Mycobacterium leprae (strain TN)).